We begin with the raw amino-acid sequence, 266 residues long: MFKNQYDTDTTTWSPTGRLFQVEYANEAVNNGSAAVGVKGADYVVLTALKRNPVSGLSSYQEKAFKLDEHVGMAISGLVADGRALSRFLRTECMNYRYMHDSDAPLVMLADIVGAKHQRHIQFAGKRPFGVGLLIAGYDRQGPRLYQTVPSGDVFDFKATAMGLRSQAARTYLERHFRGFPACDLDELVMHALRALGAATSGGVELNIKNTTIAIVGKGTPFTILTEEEARKYLDGFKTRPEDIPAVADNEEDDDELHEQPPDVEE.

The disordered stretch occupies residues 235–266 (DGFKTRPEDIPAVADNEEDDDELHEQPPDVEE). Over residues 249–266 (DNEEDDDELHEQPPDVEE) the composition is skewed to acidic residues.

This sequence belongs to the peptidase T1A family. The 26S proteasome consists of a 20S proteasome core and two 19S regulatory subunits. The 20S proteasome core is composed of 28 subunits that are arranged in four stacked rings, resulting in a barrel-shaped structure. The two end rings are each formed by seven alpha subunits, and the two central rings are each formed by seven beta subunits. The catalytic chamber with the active sites is on the inside of the barrel.

The protein resides in the cytoplasm. It localises to the nucleus. Functionally, the proteasome is a multicatalytic proteinase complex which is characterized by its ability to cleave peptides with Arg, Phe, Tyr, Leu, and Glu adjacent to the leaving group at neutral or slightly basic pH. The proteasome has an ATP-dependent proteolytic activity. In Trypanosoma brucei rhodesiense, this protein is Proteasome subunit alpha type-1.